The following is a 336-amino-acid chain: Ketol-acid reductoisomerase (NADP(+)) 1 (336 aa).

One can recognise a KARI N-terminal Rossmann domain in the interval Ala-2 to Thr-181. NADP(+) is bound by residues Tyr-25–Gln-28, Arg-48, Ser-52, and Asp-82–Gln-85. Residue His-107 is part of the active site. Gly-133 contributes to the NADP(+) binding site. The KARI C-terminal knotted domain occupies Thr-182 to Val-327. Mg(2+)-binding residues include Asp-190, Glu-194, Glu-226, and Glu-230. Ser-251 provides a ligand contact to substrate.

The protein belongs to the ketol-acid reductoisomerase family. The cofactor is Mg(2+).

The enzyme catalyses (2R)-2,3-dihydroxy-3-methylbutanoate + NADP(+) = (2S)-2-acetolactate + NADPH + H(+). The catalysed reaction is (2R,3R)-2,3-dihydroxy-3-methylpentanoate + NADP(+) = (S)-2-ethyl-2-hydroxy-3-oxobutanoate + NADPH + H(+). It participates in amino-acid biosynthesis; L-isoleucine biosynthesis; L-isoleucine from 2-oxobutanoate: step 2/4. The protein operates within amino-acid biosynthesis; L-valine biosynthesis; L-valine from pyruvate: step 2/4. Involved in the biosynthesis of branched-chain amino acids (BCAA). Catalyzes an alkyl-migration followed by a ketol-acid reduction of (S)-2-acetolactate (S2AL) to yield (R)-2,3-dihydroxy-isovalerate. In the isomerase reaction, S2AL is rearranged via a Mg-dependent methyl migration to produce 3-hydroxy-3-methyl-2-ketobutyrate (HMKB). In the reductase reaction, this 2-ketoacid undergoes a metal-dependent reduction by NADPH to yield (R)-2,3-dihydroxy-isovalerate. The chain is Ketol-acid reductoisomerase (NADP(+)) 1 from Bacillus cereus (strain ZK / E33L).